A 514-amino-acid polypeptide reads, in one-letter code: Respiratory nitrate reductase 2 beta chain (514 aa).

4Fe-4S ferredoxin-type domains are found at residues Val7–Gly35, Thr174–Glu205, and Gly207–Lys236. [4Fe-4S] cluster-binding residues include Cys16, Cys19, Cys22, Cys26, Cys183, Cys186, and Cys191. Positions 195, 216, and 222 each coordinate [3Fe-4S] cluster. [4Fe-4S] cluster-binding residues include Cys226, Cys243, Cys246, Cys258, and Cys262.

In terms of assembly, dimer of heterotrimers each composed of an alpha, a beta and a gamma chain. Alpha and beta are catalytic chains; gamma chains are involved in binding the enzyme complex to the cytoplasmic membrane. Requires [4Fe-4S] cluster as cofactor. It depends on [3Fe-4S] cluster as a cofactor.

Its subcellular location is the cell membrane. The enzyme catalyses nitrate + a quinol = a quinone + nitrite + H2O. In terms of biological role, this is a second nitrate reductase enzyme which can substitute for the NRA enzyme and allows E.coli to use nitrate as an electron acceptor during anaerobic growth. The beta chain is an electron transfer unit containing four cysteine clusters involved in the formation of iron-sulfur centers. Electrons are transferred from the gamma chain to the molybdenum cofactor of the alpha subunit. The protein is Respiratory nitrate reductase 2 beta chain (narY) of Escherichia coli (strain K12).